A 428-amino-acid chain; its full sequence is Immunoglobulin superfamily member 11 (428 aa).

Residues 1 to 22 (MTRRRSALASWLLLSLLGVAAS) form the signal peptide. The Ig-like V-type domain maps to 23-136 (LEVSESPGSV…DRGGRNIGVT (114 aa)). Topologically, residues 23–239 (LEVSESPGSV…LQVISPQPRS (217 aa)) are extracellular. 2 disulfides stabilise this stretch: Cys44-Cys120 and Cys165-Cys215. Residue Asn102 is glycosylated (N-linked (GlcNAc...) asparagine). The Ig-like C2-type domain maps to 144–234 (PSAPNCQIQG…TCLLDLQVIS (91 aa)). Residues 240-260 (VGVIAGAVGTGAVLIVICLAL) traverse the membrane as a helical segment. At 261 to 428 (TSGAFFYWRS…PAQSRAGSLV (168 aa)) the chain is on the cytoplasmic side. Arg375 carries the omega-N-methylarginine modification.

In terms of processing, N-glycosylated.

The protein resides in the cell membrane. Functions as a cell adhesion molecule through homophilic interaction. Stimulates cell growth. In Rattus norvegicus (Rat), this protein is Immunoglobulin superfamily member 11 (Igsf11).